Consider the following 427-residue polypeptide: MAP kinase-interacting serine/threonine-protein kinase 1 (427 aa).

Basic and acidic residues predominate over residues 1 to 11 (MVSSQKLEKPI). Positions 1 to 37 (MVSSQKLEKPIEMGSSEPLPIVDSDKRRKKKRKTRAT) are disordered. Residue Thr34 is modified to Phosphothreonine; by PAK2. A Phosphoserine; by PAK2 modification is found at Ser39. Residues 49 to 333 (QLTSELLGEG…AAQVLQHPWV (285 aa)) form the Protein kinase domain. ATP-binding positions include 55 to 63 (LGEGAYAKV) and Lys78. The active-site Proton acceptor is the Asp170. Ser180 and Ser185 each carry phosphoserine. Phosphothreonine is present on residues Thr209, Thr214, and Thr344. Residues 407-427 (RALAQAGRSRDANPCLTPAGL) form a disordered region.

Belongs to the protein kinase superfamily. CAMK Ser/Thr protein kinase family. As to quaternary structure, interacts with the C-terminal regions of EIF4G1 and EIF4G2. Also binds to dephosphorylated ERK1 and ERK2, and to the p38 kinases. Mg(2+) is required as a cofactor. In terms of processing, dual phosphorylation of Thr-209 and Thr-214 activates the kinase. Phosphorylation of Thr-344 activates the kinase. MAPK3/ERK1 is one of the kinases which activate MKNK1/MNK1. Phosphorylation by PAK2 leads to a reduced phosphorylation of EIF4G1. In terms of tissue distribution, ubiquitously expressed in all tissues examined, with high levels in skeletal muscle.

It carries out the reaction L-seryl-[protein] + ATP = O-phospho-L-seryl-[protein] + ADP + H(+). The catalysed reaction is L-threonyl-[protein] + ATP = O-phospho-L-threonyl-[protein] + ADP + H(+). Phosphorylated and activated by the p38 kinases and kinases in the Erk pathway. In terms of biological role, may play a role in the response to environmental stress and cytokines. Appears to regulate translation by phosphorylating EIF4E, thus increasing the affinity of this protein for the 7-methylguanosine-containing mRNA cap. The sequence is that of MAP kinase-interacting serine/threonine-protein kinase 1 (Mknk1) from Mus musculus (Mouse).